Reading from the N-terminus, the 262-residue chain is Abhydrolase domain-containing protein ACTT2-2 (262 aa).

Positions 260-262 match the Peroxisomal targeting signal type 1 motif; sequence SKL.

This sequence belongs to the AB hydrolase superfamily. AKT2 hydrolase family.

It is found in the peroxisome. It participates in mycotoxin biosynthesis. Its function is as follows. Abhydrolase domain-containing protein; part of the gene clusters that mediate the biosynthesis of the host-selective toxins (HSTs) ACT-toxins responsible for brown spot of tangerine disease by the tangerine pathotype which affects tangerines and mandarins. ACT-toxins consist of three moieties, 9,10-epoxy-8-hydroxy-9-methyl-decatrienoic acid (EDA), valine and a polyketide. ACT-toxin I is toxic to both citrus and pear; toxin II the 5''-deoxy derivative of ACT-toxin I, is highly toxic to pear and slightly toxic to citrus. On cellular level, ACT-toxins affect plasma membrane of susceptible cells and cause a sudden increase in loss of K(+) after a few minutes of toxin treatment. The acyl-CoA ligase ACTT1, the hydrolase ACTT2, the enoyl-CoA hydratases ACTT3 and ACTT6, and the acyl-CoA synthetase ACTT5 are all involved in the biosynthesis of the AK-, AF- and ACT-toxin common 9,10-epoxy-8-hydroxy-9-methyl-decatrienoic acid (EDA) structural moiety. The exact role of each enzyme, and of additional enzymes identified within the AF-toxin clusters have still to be determined. On the other hand, ACTTS1 to ACTTS4 are specific to the tangerine pathotype. The function of ACTTS3 is to elongate the polyketide chain portion of ACT-toxin that is unique to this toxin. The enoyl-reductase ACTTS2 might complement the missing enoyl-reductase (ER) domain in ACTTS3 in the synthesis of the polyketide portion of ACT-toxin. The roles of the nonribosomal peptide synthetases-related proteins ACTTS1 and ACTTS4 have also still not been elucidated. This Alternaria alternata (Alternaria rot fungus) protein is Abhydrolase domain-containing protein ACTT2-2 (ACTT2-2).